Reading from the N-terminus, the 57-residue chain is uncharacterized protein (57 aa).

A helical transmembrane segment spans residues 34-51 (TALLDAAAVVVVPGLLAA).

It is found in the membrane. This is an uncharacterized protein from Dictyostelium discoideum (Social amoeba).